A 1360-amino-acid chain; its full sequence is DNA-directed RNA polymerase subunit beta (1360 aa).

The protein belongs to the RNA polymerase beta chain family. The RNAP catalytic core consists of 2 alpha, 1 beta, 1 beta' and 1 omega subunit. When a sigma factor is associated with the core the holoenzyme is formed, which can initiate transcription.

It catalyses the reaction RNA(n) + a ribonucleoside 5'-triphosphate = RNA(n+1) + diphosphate. DNA-dependent RNA polymerase catalyzes the transcription of DNA into RNA using the four ribonucleoside triphosphates as substrates. The protein is DNA-directed RNA polymerase subunit beta of Teredinibacter turnerae (strain ATCC 39867 / T7901).